The primary structure comprises 415 residues: Dynein assembly factor with WD repeat domains 1 (415 aa).

WD repeat units follow at residues 90–129 (AHIL…ELHT), 132–172 (GHRN…CFYT), 175–214 (GHTA…EVST), 217–256 (GHFA…KVHV), 259–298 (GHRG…CLAT), 301–340 (GHND…CLCQ), 343–384 (GHKG…QVLE), and 385–415 (GHSD…RIWH).

This sequence belongs to the WD repeat WDR69 family. Expressed in organs bearing motile cilia, including the pronephros, otic vesicles and Kupffer's vesicle.

It is found in the cytoplasm. The protein localises to the cytoskeleton. Its subcellular location is the flagellum basal body. It localises to the flagellum axoneme. In terms of biological role, required for axonemal dynein assembly and ciliary motility in ciliated organs, including Kupffer's vesicle, during embryogenesis. Facilitates the onset of robust cilia motility during development. This Danio rerio (Zebrafish) protein is Dynein assembly factor with WD repeat domains 1 (daw1).